A 269-amino-acid polypeptide reads, in one-letter code: ParA family protein MG470 (269 aa).

Belongs to the ParA family.

The protein is ParA family protein MG470 of Mycoplasma genitalium (strain ATCC 33530 / DSM 19775 / NCTC 10195 / G37) (Mycoplasmoides genitalium).